A 530-amino-acid chain; its full sequence is UDP-glucuronosyltransferase 1A8 (530 aa).

An N-terminal signal peptide occupies residues 1–25; it reads MAPSGCPPSLPLCVCLFLASGFAQA. N-linked (GlcNAc...) asparagine glycosylation is found at Asn71, Asn292, and Asn430. A helical membrane pass occupies residues 488 to 504; it reads VIGFLLAIVLTVVFIVY.

Belongs to the UDP-glycosyltransferase family. As to quaternary structure, homodimers. Homooligomer. Interacts with UGT1A1, UGT1A3, UGT1A4, UGT1A6, UGT1A7, UGT1A8, UGT1A9 and UGT1A10 to form heterodimers.

It localises to the endoplasmic reticulum membrane. The catalysed reaction is glucuronate acceptor + UDP-alpha-D-glucuronate = acceptor beta-D-glucuronoside + UDP + H(+). The enzyme catalyses 17beta-estradiol + UDP-alpha-D-glucuronate = 17beta-estradiol 3-O-(beta-D-glucuronate) + UDP + H(+). It catalyses the reaction 17alpha-estradiol + UDP-alpha-D-glucuronate = 17alpha-estradiol 3-O-(beta-D-glucuronate) + UDP + H(+). It carries out the reaction estrone + UDP-alpha-D-glucuronate = estrone 3-O-(beta-D-glucuronate) + UDP + H(+). The catalysed reaction is 16alpha,17alpha-estriol + UDP-alpha-D-glucuronate = 16alpha,17alpha-estriol 3-O-(beta-D-glucuronate) + UDP + H(+). The enzyme catalyses 2-hydroxy-17beta-estradiol + UDP-alpha-D-glucuronate = 2-hydroxy-17beta-estradiol 3-O-(beta-D-glucuronate) + UDP + H(+). It catalyses the reaction 2-hydroxy-17beta-estradiol + UDP-alpha-D-glucuronate = 17beta-estradiol 2-O-(beta-D-glucuronate) + UDP + H(+). It carries out the reaction 2-hydroxyestrone + UDP-alpha-D-glucuronate = 2-hydroxyestrone 3-O-(beta-D-glucuronate) + UDP + H(+). The catalysed reaction is 4-hydroxy-17beta-estradiol + UDP-alpha-D-glucuronate = 4-hydroxy-17beta-estradiol 3-O-(beta-D-glucuronate) + UDP + H(+). The enzyme catalyses 4-hydroxy-17beta-estradiol + UDP-alpha-D-glucuronate = 17beta-estradiol 4-O-(beta-D-glucuronate) + UDP + H(+). It catalyses the reaction 4-hydroxyestrone + UDP-alpha-D-glucuronate = 4-hydroxyestrone 3-O-(beta-D-glucuronate) + UDP + H(+). It carries out the reaction 4-hydroxyestrone + UDP-alpha-D-glucuronate = estrone 4-O-(beta-D-glucuronate) + UDP + H(+). The catalysed reaction is 2-methoxy-17beta-estradiol + UDP-alpha-D-glucuronate = 2-methoxy-17beta-estradiol 3-O-(beta-D-glucuronate) + UDP + H(+). The enzyme catalyses 2-methoxyestrone + UDP-alpha-D-glucuronate = 2-methoxyestrone 3-O-(beta-D-glucuronate) + UDP + H(+). It catalyses the reaction 4-methoxy-17beta-estradiol + UDP-alpha-D-glucuronate = 4-methoxy-17beta-estradiol 3-O-(beta-D-glucuronate) + UDP + H(+). It carries out the reaction 4-methoxyestrone + UDP-alpha-D-glucuronate = 4-methoxyestrone 3-O-(beta-D-glucuronate) + UDP + H(+). The catalysed reaction is 17beta-hydroxy-5alpha-androstan-3-one + UDP-alpha-D-glucuronate = 5alpha-dihydrotestosterone 17-O-(beta-D-glucuronate) + UDP + H(+). The enzyme catalyses 5alpha-dihydrotestosterone 17-O-(beta-D-glucuronate) + UDP-alpha-D-glucuronate = 5alpha-dihydrotestosterone 17-O-[beta-D-glucuronosyl-(1-&gt;2)-glucuronate] + UDP + H(+). It catalyses the reaction prunetin + UDP-alpha-D-glucuronate = prunetin-4'-O-beta-D-glucuronide + UDP. It carries out the reaction prunetin + UDP-alpha-D-glucuronate = prunetin-5-O-beta-D-glucuronide + UDP. The catalysed reaction is (E)-ferulate + UDP-alpha-D-glucuronate = (E)-4-O-(beta-D-glucuronosyl)-ferulate + UDP + H(+). The enzyme catalyses (E)-ferulate + UDP-alpha-D-glucuronate = (E)-ferulic acid beta-D-glucuronate ester + UDP. It catalyses the reaction candesartan + UDP-alpha-D-glucuronate = candesartan O-beta-D-glucuronoside + UDP. It carries out the reaction mycophenolate + UDP-alpha-D-glucuronate = mycophenolate 7-O-beta-D-glucuronide + UDP + H(+). Functionally, UDP-glucuronosyltransferase (UGT) that catalyzes phase II biotransformation reactions in which lipophilic substrates are conjugated with glucuronic acid to increase the metabolite's water solubility, thereby facilitating excretion into either the urine or bile. Essential for the elimination and detoxification of drugs, xenobiotics and endogenous compounds. Catalyzes the glucuronidation of endogenous steroid hormones such as androgens and estrogens. Produces dihydrotestosterone (DHT) diglucuronide from the DHT after two subsequent glucoronidation steps. Involved in the glucuronidation of the phytochemical ferulic acid at the phenolic or the carboxylic acid group. Also catalyzes the glucuronidation of the isoflavones genistein, daidzein, glycitein, formononetin, biochanin A and prunetin, which are phytoestrogens with anticancer and cardiovascular properties. Involved in the glucuronidation of the AGTR1 angiotensin receptor antagonist caderastan, a drug which can inhibit the effect of angiotensin II. Also metabolizes mycophenolate, an immunosuppressive agent. The sequence is that of UDP-glucuronosyltransferase 1A8 from Rattus norvegicus (Rat).